The chain runs to 513 residues: Probable mannosyl-oligosaccharide alpha-1,2-mannosidase 1B (513 aa).

A signal peptide spans 1 to 21 (MHLSSLSLSLTALAIVSPSAA). N-linked (GlcNAc...) asparagine glycans are attached at residues asparagine 97, asparagine 117, asparagine 184, asparagine 251, asparagine 322, asparagine 348, and asparagine 368. Cysteine 334 and cysteine 363 are disulfide-bonded. The active-site Proton donor is the glutamate 377. Threonine 503 is a Ca(2+) binding site.

This sequence belongs to the glycosyl hydrolase 47 family. As to quaternary structure, monomer. Ca(2+) is required as a cofactor. Requires Mg(2+) as cofactor.

Its subcellular location is the cytoplasmic vesicle lumen. It catalyses the reaction N(4)-(alpha-D-Man-(1-&gt;2)-alpha-D-Man-(1-&gt;2)-alpha-D-Man-(1-&gt;3)-[alpha-D-Man-(1-&gt;2)-alpha-D-Man-(1-&gt;3)-[alpha-D-Man-(1-&gt;2)-alpha-D-Man-(1-&gt;6)]-alpha-D-Man-(1-&gt;6)]-beta-D-Man-(1-&gt;4)-beta-D-GlcNAc-(1-&gt;4)-beta-D-GlcNAc)-L-asparaginyl-[protein] (N-glucan mannose isomer 9A1,2,3B1,2,3) + 4 H2O = N(4)-(alpha-D-Man-(1-&gt;3)-[alpha-D-Man-(1-&gt;3)-[alpha-D-Man-(1-&gt;6)]-alpha-D-Man-(1-&gt;6)]-beta-D-Man-(1-&gt;4)-beta-D-GlcNAc-(1-&gt;4)-beta-D-GlcNAc)-L-asparaginyl-[protein] (N-glucan mannose isomer 5A1,2) + 4 beta-D-mannose. The catalysed reaction is N(4)-(alpha-D-Man-(1-&gt;2)-alpha-D-Man-(1-&gt;2)-alpha-D-Man-(1-&gt;3)-[alpha-D-Man-(1-&gt;3)-[alpha-D-Man-(1-&gt;2)-alpha-D-Man-(1-&gt;6)]-alpha-D-Man-(1-&gt;6)]-beta-D-Man-(1-&gt;4)-beta-D-GlcNAc-(1-&gt;4)-beta-D-GlcNAc)-L-asparaginyl-[protein] (N-glucan mannose isomer 8A1,2,3B1,3) + 3 H2O = N(4)-(alpha-D-Man-(1-&gt;3)-[alpha-D-Man-(1-&gt;3)-[alpha-D-Man-(1-&gt;6)]-alpha-D-Man-(1-&gt;6)]-beta-D-Man-(1-&gt;4)-beta-D-GlcNAc-(1-&gt;4)-beta-D-GlcNAc)-L-asparaginyl-[protein] (N-glucan mannose isomer 5A1,2) + 3 beta-D-mannose. The protein operates within protein modification; protein glycosylation. Functionally, involved in the maturation of Asn-linked oligosaccharides. Progressively trims alpha-1,2-linked mannose residues from Man(9)GlcNAc(2) to produce Man(5)GlcNAc(2). The sequence is that of Probable mannosyl-oligosaccharide alpha-1,2-mannosidase 1B (mns1B) from Aspergillus niger (strain ATCC MYA-4892 / CBS 513.88 / FGSC A1513).